The sequence spans 493 residues: MDSSDSKAATDEEIRRALKAADLMKILDGKIALGNKSGTKNLGEHKFWKTQPVPQITGSGAPAPIEEGPIDDPKTPADVRQEPGVLPAGFEWSTIDINDEEQSKEVYVLLCENYVEDDDAMFRFNYSREFLLWALTAPGYLPDWHIGVRVQKTKKLVAFISGIKIDIRVRAKTFPAAEINFLCVHKKLRSKRLAPVLIKEVTRRVNLTNIWQAIYTAGVILPTPIGTCRYFHRNLNPPKLVDIGFSPLPRGSTIARLVQQYSVPSHPRIPGFREMKKEDVPQVGALLRRYLDRFDVAQAFRDDDEVEHWLLSGQGKEVGGRRVEQVVWAYVVEDPTTHRITDLISFYALPSTIMKHPKHNLLNAAYMFYYATDVVFPPSSSSANSDVDVDANAGESSVAAVGTGGEDAKTKKKLETRLNALTADILIIAKQAGFDVFNALTLLDNNMFLQEQKFGPGDGYLNYYLYNWNCAPIDGGHHSTTAKQGSKIGVVML.

45–48 is a tetradecanoyl-CoA binding site; the sequence is HKFW. A disordered region spans residues 53-73; that stretch reads VPQITGSGAPAPIEEGPIDDP. Residues 182–184 and 190–194 each bind tetradecanoyl-CoA; these read LCV and SKRLA. Leu-493 acts as the Proton acceptor; via carboxylate in catalysis.

It belongs to the NMT family. Monomer.

The protein localises to the cytoplasm. It carries out the reaction N-terminal glycyl-[protein] + tetradecanoyl-CoA = N-tetradecanoylglycyl-[protein] + CoA + H(+). Adds a myristoyl group to the N-terminal glycine residue of certain cellular proteins. This is Glycylpeptide N-tetradecanoyltransferase from Cryptococcus neoformans var. neoformans serotype D (strain B-3501A) (Filobasidiella neoformans).